The chain runs to 129 residues: UPF0325 protein SG1947 (129 aa).

Belongs to the UPF0325 family.

The sequence is that of UPF0325 protein SG1947 from Sodalis glossinidius (strain morsitans).